A 71-amino-acid polypeptide reads, in one-letter code: Cytotoxic linear peptide IsCT2 (71 aa).

Residues 1–23 form the signal peptide; that stretch reads MKTQFAILLVALVLFQMFAQSEA. F36 carries the post-translational modification Phenylalanine amide. A propeptide spanning residues 40–71 is cleaved from the precursor; the sequence is ALNNDLDLDGLDELFDGEISQADVDFLKELMR.

This sequence belongs to the non-disulfide-bridged peptide (NDBP) superfamily. Short antimicrobial peptide (group 4) family. Post-translationally, isCT2F is an enzymatic proteolytic cleavage product of IsCT2 by the proteases present in the venom. As to expression, expressed by the venom gland.

The protein localises to the secreted. It localises to the target cell membrane. IsCT2 shows weak hemolytic activity and antibacterial activity against both Gram-positive and Gram-negative bacteria probably by forming pores in the cell membrane. IsCT2 adopts an amphipathic alpha-helical structure. Functionally, isCT2f shows neither hemolytic, nor antibacterial activities, surely due to the fact that it cannot apply amphipathic alpha-helical structure. This chain is Cytotoxic linear peptide IsCT2, found in Opisthacanthus madagascariensis (Scorpion).